The chain runs to 184 residues: Photosystem I assembly protein Ycf4 (184 aa).

A run of 2 helical transmembrane segments spans residues 20–42 (VNLCWACILVCGATGFLLVGFSS) and 57–79 (IAFIPQGLVMCFYGIAGLFLGLY).

It belongs to the Ycf4 family.

It is found in the plastid. It localises to the chloroplast thylakoid membrane. In terms of biological role, seems to be required for the assembly of the photosystem I complex. The protein is Photosystem I assembly protein Ycf4 of Adiantum capillus-veneris (Maidenhair fern).